Consider the following 537-residue polypeptide: Exoglucanase 1 (537 aa).

A signal peptide spans 1 to 18 (MKGSISYQIYKGALLLSA). The interval 19-453 (LLNSVSAQQV…YVIYSNIKTG (435 aa)) is catalytic. The N-linked (GlcNAc...) asparagine glycan is linked to N136. E235 serves as the catalytic Nucleophile. E240 acts as the Proton donor in catalysis. N414 and N456 each carry an N-linked (GlcNAc...) asparagine glycan. The interval 454–477 (PLNSTFTGGTTSSSSTTTTTSKST) is linker. Residues 458–502 (TFTGGTTSSSSTTTTTSKSTSTSSSSKTTTTVTTTTTSSGSSGTG) are compositionally biased toward low complexity. The tract at residues 458-503 (TFTGGTTSSSSTTTTTSKSTSTSSSSKTTTTVTTTTTSSGSSGTGA) is disordered. The 37-residue stretch at 501-537 (TGARDWAQCGGNGWTGPTTCVSPYTCTKQNDWYSQCL) folds into the CBM1 domain. Intrachain disulfides connect C509/C526 and C520/C536.

The protein belongs to the glycosyl hydrolase 7 (cellulase C) family.

It is found in the secreted. The catalysed reaction is Hydrolysis of (1-&gt;4)-beta-D-glucosidic linkages in cellulose and cellotetraose, releasing cellobiose from the non-reducing ends of the chains.. The sequence is that of Exoglucanase 1 (cbh1) from Penicillium janthinellum (Penicillium vitale).